The primary structure comprises 173 residues: RNA polymerase sigma factor TcsR (173 aa).

A sigma-70 factor domain-4 region spans residues 122-169 (IKDLTQNEKNIIRKIYLDRLRESEISRELNISRQAVNKTHLRALEKLK). The H-T-H motif DNA-binding region spans 143–162 (ESEISRELNISRQAVNKTHL).

It belongs to the sigma-70 factor family.

Its function is as follows. Sigma factors are initiation factors that promote the attachment of RNA polymerase to specific initiation sites and are then released. Transcriptional regulator specifically required to activate expression of the toxin gene locus, composed of tcsL, tcsH and tcdE/utxA. The chain is RNA polymerase sigma factor TcsR from Paraclostridium sordellii (Clostridium sordellii).